A 101-amino-acid polypeptide reads, in one-letter code: Stefin-C (101 aa).

M1 carries the N-acetylmethionine modification. A Secondary area of contact motif is present at residues Q49–G53.

Belongs to the cystatin family.

The protein localises to the cytoplasm. Strong inhibitor of papain and cathepsin L but poor inhibitor of cathepsin B. In Bos taurus (Bovine), this protein is Stefin-C.